The following is a 349-amino-acid chain: Ribosome production factor 1 (349 aa).

Disordered stretches follow at residues 1 to 58 (MAKA…SEIK) and 71 to 105 (KQQQ…PKTI). Basic and acidic residues predominate over residues 87–97 (KEREALGDKAP). In terms of domain architecture, Brix spans 142–325 (PKILITTSDR…LRSLQKGTFD (184 aa)). The segment at 303–320 (VGIQELGPRFTLKLRSLQ) is RNA-binding.

It localises to the nucleus. The protein localises to the nucleolus. Its function is as follows. May be required for ribosome biogenesis. The polypeptide is Ribosome production factor 1 (Rpf1) (Mus musculus (Mouse)).